A 501-amino-acid chain; its full sequence is Lysine--tRNA ligase (501 aa).

The Mg(2+) site is built by Glu404 and Glu411.

It belongs to the class-II aminoacyl-tRNA synthetase family. Homodimer. It depends on Mg(2+) as a cofactor.

It localises to the cytoplasm. The catalysed reaction is tRNA(Lys) + L-lysine + ATP = L-lysyl-tRNA(Lys) + AMP + diphosphate. The chain is Lysine--tRNA ligase from Campylobacter jejuni subsp. doylei (strain ATCC BAA-1458 / RM4099 / 269.97).